A 320-amino-acid chain; its full sequence is MLNDLKLSLQYILPKLWLTRLAGWGASKRAGWLTKLVIDLFVKYYKVDMKEAQKPDTAAYRTFNDFFVRPLRDDVRPLNTDPNVLVMPADGVISQLGAIENDKILQAKGHDYSLEALLAGNYQMADLFRNGSFATTYLSPRDYHRVHMPCNGILREMIYVPGDLFSVNHLTAQNVPNLFARNERVICLFDTEFGPMAQILVGATIVGSIETVWSGTVTPPREGIIKRWTWPAGDNEGSIALLKGQEMGRFKLGSTVINLFAPGQVKLVDTLQSLSVTKIGQPLATAVEATAAAEPAPLPEEEIRAEHRASPLVDDKQDQG.

Residues D90, H147, and S254 each act as charge relay system; for autoendoproteolytic cleavage activity in the active site. S254 acts as the Schiff-base intermediate with substrate; via pyruvic acid; for decarboxylase activity in catalysis. S254 carries the pyruvic acid (Ser); by autocatalysis modification. A disordered region spans residues 290–320 (TAAAEPAPLPEEEIRAEHRASPLVDDKQDQG). Basic and acidic residues predominate over residues 301–320 (EEIRAEHRASPLVDDKQDQG).

This sequence belongs to the phosphatidylserine decarboxylase family. PSD-B subfamily. Prokaryotic type I sub-subfamily. In terms of assembly, heterodimer of a large membrane-associated beta subunit and a small pyruvoyl-containing alpha subunit. The cofactor is pyruvate. Post-translationally, is synthesized initially as an inactive proenzyme. Formation of the active enzyme involves a self-maturation process in which the active site pyruvoyl group is generated from an internal serine residue via an autocatalytic post-translational modification. Two non-identical subunits are generated from the proenzyme in this reaction, and the pyruvate is formed at the N-terminus of the alpha chain, which is derived from the carboxyl end of the proenzyme. The autoendoproteolytic cleavage occurs by a canonical serine protease mechanism, in which the side chain hydroxyl group of the serine supplies its oxygen atom to form the C-terminus of the beta chain, while the remainder of the serine residue undergoes an oxidative deamination to produce ammonia and the pyruvoyl prosthetic group on the alpha chain. During this reaction, the Ser that is part of the protease active site of the proenzyme becomes the pyruvoyl prosthetic group, which constitutes an essential element of the active site of the mature decarboxylase.

The protein localises to the cell membrane. It carries out the reaction a 1,2-diacyl-sn-glycero-3-phospho-L-serine + H(+) = a 1,2-diacyl-sn-glycero-3-phosphoethanolamine + CO2. The protein operates within phospholipid metabolism; phosphatidylethanolamine biosynthesis; phosphatidylethanolamine from CDP-diacylglycerol: step 2/2. Its function is as follows. Catalyzes the formation of phosphatidylethanolamine (PtdEtn) from phosphatidylserine (PtdSer). In Klebsiella pneumoniae subsp. pneumoniae (strain ATCC 700721 / MGH 78578), this protein is Phosphatidylserine decarboxylase proenzyme.